A 177-amino-acid chain; its full sequence is Large ribosomal subunit protein uL10 (177 aa).

This sequence belongs to the universal ribosomal protein uL10 family. As to quaternary structure, part of the ribosomal stalk of the 50S ribosomal subunit. The N-terminus interacts with L11 and the large rRNA to form the base of the stalk. The C-terminus forms an elongated spine to which L12 dimers bind in a sequential fashion forming a multimeric L10(L12)X complex.

In terms of biological role, forms part of the ribosomal stalk, playing a central role in the interaction of the ribosome with GTP-bound translation factors. This Legionella pneumophila (strain Corby) protein is Large ribosomal subunit protein uL10.